A 578-amino-acid chain; its full sequence is DNA primase (578 aa).

The CHC2-type zinc-finger motif lies at 40–64; sequence CPFHQEKTPSFTVNFEKQFYFCFGC. Positions 257-339 constitute a Toprim domain; it reads KQILIVEGYV…GKNVKFIFLP (83 aa). E263, D307, and D309 together coordinate Mg(2+).

It belongs to the DnaG primase family. As to quaternary structure, monomer. Interacts with DnaB. Requires Zn(2+) as cofactor. The cofactor is Mg(2+).

The catalysed reaction is ssDNA + n NTP = ssDNA/pppN(pN)n-1 hybrid + (n-1) diphosphate.. Its function is as follows. RNA polymerase that catalyzes the synthesis of short RNA molecules used as primers for DNA polymerase during DNA replication. The chain is DNA primase from Buchnera aphidicola subsp. Baizongia pistaciae (strain Bp).